Here is a 159-residue protein sequence, read N- to C-terminus: Succinate dehydrogenase assembly factor 2, mitochondrial (159 aa).

The transit peptide at 1–14 directs the protein to the mitochondrion; sequence MASFCLSRCCALRG.

It belongs to the SDHAF2 family. As to quaternary structure, interacts with the flavoprotein subunit within the SDH catalytic dimer.

The protein resides in the mitochondrion matrix. In terms of biological role, plays an essential role in the assembly of succinate dehydrogenase (SDH), an enzyme complex (also referred to as respiratory complex II) that is a component of both the tricarboxylic acid (TCA) cycle and the mitochondrial electron transport chain, and which couples the oxidation of succinate to fumarate with the reduction of ubiquinone (coenzyme Q) to ubiquinol. Required for flavinylation (covalent attachment of FAD) of the flavoprotein subunit of the SDH catalytic dimer. In Culex quinquefasciatus (Southern house mosquito), this protein is Succinate dehydrogenase assembly factor 2, mitochondrial.